The following is a 286-amino-acid chain: MAENTMWHETLHDQFGQYFAVDNVLYHEKTDHQDLIIFENAAFGRVMALDGVVQTTERDEFIYHEMMTHVPLLAHGHAKHVLIIGGGDGAMLREVTRHKNVETITMVEIDAGVVSFCRQYLPNHNAGSYDDPRFTLVIDDGVNFVNQTHQTFDVIISDCTDPIGPGESLFTSAFYEGCKRCLNPGGIFVAQNGVCFLQQDEALDSHRKLSHYFSDVGFYQAAIPTYYGGIMTFAWATNNDALRHLSSEIIQARFHAAGLKCRYYNPAIHAAAFALPQYLHDALSAQ.

The 234-residue stretch at 5 to 238 (TMWHETLHDQ…GIMTFAWATN (234 aa)) folds into the PABS domain. Residue Gln-33 participates in S-methyl-5'-thioadenosine binding. 2 residues coordinate spermidine: His-64 and Asp-88. S-methyl-5'-thioadenosine is bound by residues Glu-108 and 140–141 (DG). Asp-158 serves as the catalytic Proton acceptor. 158-161 (DCTD) contacts spermidine. S-methyl-5'-thioadenosine is bound at residue Pro-165.

Belongs to the spermidine/spermine synthase family. As to quaternary structure, homodimer or homotetramer.

It is found in the cytoplasm. It catalyses the reaction S-adenosyl 3-(methylsulfanyl)propylamine + putrescine = S-methyl-5'-thioadenosine + spermidine + H(+). It participates in amine and polyamine biosynthesis; spermidine biosynthesis; spermidine from putrescine: step 1/1. Its function is as follows. Catalyzes the irreversible transfer of a propylamine group from the amino donor S-adenosylmethioninamine (decarboxy-AdoMet) to putrescine (1,4-diaminobutane) to yield spermidine. The protein is Polyamine aminopropyltransferase of Salmonella paratyphi B (strain ATCC BAA-1250 / SPB7).